A 365-amino-acid chain; its full sequence is Ubiquitin carboxyl-terminal hydrolase 4 (365 aa).

The N-myristoyl glycine moiety is linked to residue glycine 2. The region spanning 23–362 (FGFENFGNTC…HGYILLYESL (340 aa)) is the USP domain. Cysteine 32 functions as the Nucleophile in the catalytic mechanism. Positions 81 to 98 (KKKTGVIAPKRFVQRLKK) match the Bipartite nuclear localization signal motif. Residue histidine 310 is the Proton acceptor of the active site.

Belongs to the peptidase C19 family. In terms of tissue distribution, constitutively and ubiquitously expressed.

Its subcellular location is the nucleus. It carries out the reaction Thiol-dependent hydrolysis of ester, thioester, amide, peptide and isopeptide bonds formed by the C-terminal Gly of ubiquitin (a 76-residue protein attached to proteins as an intracellular targeting signal).. Its function is as follows. Recognizes and hydrolyzes the peptide bond at the C-terminal Gly of ubiquitin. Involved in the processing of poly-ubiquitin precursors as well as that of ubiquitinated proteins. Required for the correct development of pollen. In Arabidopsis thaliana (Mouse-ear cress), this protein is Ubiquitin carboxyl-terminal hydrolase 4 (UBP4).